The following is a 381-amino-acid chain: D-rhamnosyltransferase WbpZ (381 aa).

Substrate contacts are provided by E19, H116, K206, and V252.

This sequence belongs to the glycosyltransferase group 1 family. Glycosyltransferase 4 subfamily.

It localises to the cytoplasm. It catalyses the reaction GDP-alpha-D-rhamnose + N-acetyl-alpha-D-glucosaminyl-di-trans,octa-cis-undecaprenyl diphosphate = alpha-D-rhamnosyl-(1-&gt;3)-N-acetyl-alpha-D-glucosaminyl-1-diphospho-di-trans,octa-cis-undecaprenol + GDP + H(+). The catalysed reaction is GDP-alpha-D-rhamnose + N-acetyl-alpha-D-galactosaminyl-di-trans,octa-cis-undecaprenyl diphosphate = alpha-D-rhamnosyl-(1-&gt;3)-N-acetyl-alpha-D-galactosaminyl-1-diphospho-di-trans,octa-cis-undecaprenol + GDP + H(+). The enzyme catalyses N-acetyl-alpha-D-glucosaminyl-di-trans,octa-cis-undecaprenyl diphosphate + GDP-alpha-D-mannose = alpha-D-mannosyl-(1-&gt;3)-N-acetyl-alpha-D-glucosaminyl-di-trans,octa-cis-undecaprenyl diphosphate + GDP + H(+). It carries out the reaction N-acetyl-alpha-D-galactosaminyl-di-trans,octa-cis-undecaprenyl diphosphate + GDP-alpha-D-mannose = alpha-D-mannosyl-(1-&gt;3)-N-acetyl-alpha-D-galctosaminyl-1-diphospho-di-trans,octa-cis-undecaprenol + GDP + H(+). The protein operates within lipopolysaccharide biosynthesis; LPS oligosaccharide biosynthesis. With respect to regulation, not activated by dithiothreitol (DTT) using GlcNAc-alpha-PO(3)-PO(3)-phenylundecyl (GlcNAc-PP-PhU) as acceptor substrate. 0.25% Triton X-100 and 0.125% NP-40 increases the activity 2.5-fold and 2-fold, respectively. 0.125% octyl glucoside has little effect on activity. Slightly increased activity with Mg(2+) and Pb(2+), while no effect with Mn(2+), Co(2+), Ni(2+), Cu(2+), Zn(2+), Ca(2+) or EDTA. Not inhibited by N-butyryl-galactosamine-alpha-benzyl or N-butyryl-glucosamine-beta-benzyl. Bis-imidazolium salts having aliphatic spacer groups with 4 or 6 carbons have little effect on activity, but spacer groups of 18-22 aliphatic carbons inhibit activity, with the most potent inhibitor being bis-imidazolium salt having a 20-carbon chain spacer length. Functionally, non-processive alpha-1,3-D-rhamnosyltransferase. Catalyzes the transfer of one D-rhamnose (D-Rha) residue from donor substrate GDP-D-Rha in alpha-1-3 linkage to both GlcNAc- and GalNAc-diphosphate-lipid acceptor substrates. Is also able to transfer D-mannose (D-Man) to these acceptors at a lower level. Nucleotide sugars GDP-D-Rha, GDP-Fuc, UDP-Gal, UDP-GalNAc, UDP-GlcNAc and CMP-sialic acid cannot act as donor substrates. Only compounds with a diphosphate as the aglycone group can act as acceptor substrates. No activity is detected with compounds containing a diphosphate mimic. Fluorescent undecyl-anthracenyl group-containing compounds, such as GlcNAc-PO(3)-PO(3)-AnthrU and GalNAc-PO(3)-PO(3)-AnthrU, are also good acceptor substrates. Involved in the biosynthesis of the common polysaccharide antigen (CPA), also called A band, which is one of the two major cell surface O-antigens of the P.aeruginosa lipopolysaccharide. Involved in susceptibility to antibiotic colistin. In Pseudomonas aeruginosa (strain ATCC 15692 / DSM 22644 / CIP 104116 / JCM 14847 / LMG 12228 / 1C / PRS 101 / PAO1), this protein is D-rhamnosyltransferase WbpZ.